The sequence spans 130 residues: Small ribosomal subunit protein uS8 (130 aa).

Belongs to the universal ribosomal protein uS8 family. Part of the 30S ribosomal subunit. Contacts proteins S5 and S12.

Its function is as follows. One of the primary rRNA binding proteins, it binds directly to 16S rRNA central domain where it helps coordinate assembly of the platform of the 30S subunit. This is Small ribosomal subunit protein uS8 from Alteromonas mediterranea (strain DSM 17117 / CIP 110805 / LMG 28347 / Deep ecotype).